Here is a 240-residue protein sequence, read N- to C-terminus: Terpene cyclase cdmG (240 aa).

The next 6 membrane-spanning stretches (helical) occupy residues Tyr16 to Gly36, Tyr48 to Ile68, Ile78 to Ala98, Ile112 to Ala132, Val134 to Gly154, and Gly167 to Val187. An N-linked (GlcNAc...) asparagine glycan is attached at Asn197. Residues Ile205 to Trp225 traverse the membrane as a helical segment.

This sequence belongs to the paxB family.

The protein localises to the membrane. It carries out the reaction verruculide C epoxide = 3-hydroxypentacecilide A. Its pathway is secondary metabolite biosynthesis; terpenoid biosynthesis. Terpene cyclase; part of the gene cluster that mediates the biosynthesis of chrodrimanin B, a meroterpenoid that acts as a potent blocker of insect GABA-gated chloride channels. The first step of the pathway is the biosynthesis of 6-hydroxymellein by the polyketide synthase cdmE. The prenyltransferase cdmH acts as a 6-hydroxymellein 5-farnesyltransferase and produces the hydrophobic metabolite verruculide C. The FAD-dependent monooxygenase cdmI further converts verruculide C into verruculide B. The terpene cyclase cdmG then produced the pentacyclic molecule 3-hydroxypentacecilide A, the backbone structure of chrodrimanin B, via folding the farnesyl moiety of the substrate into the chair-boat conformation. The short-chain dehydrogenase/reductase cdmF functions as the 3-OH dehydrogenase that oxidizes the C-3 hydroxyl group of 3-hydroxypentacecilide A and produces chrodrimanin C, the dehydrogenated product of 3-hydroxypentacecilide A. The cytochrome P450 monooxygenase cdmJ then accepts both 3-hydroxypentacecilide A and chrodrimanin C and functions as a C-7-beta-hydroxylase to produce respectively chrodrimanin H and chrodrimanin F. The dioxygenase cdmA accepts chrodrimanin H to afford chrodrimanin E, which is further transformed to chrodrimanin A by the dioxygenase cdmD. CdmA can also accept chrodrimanin C as substrate to convert it into verruculide A, which is further converted into chrodrimanin T by cdmD. The last step of the biosynthesis is proposed to be performed by the acetyltransferase cdmC which acetylates chrodrimanin A to yield chrodrimanin B. The pathway may also lead to the production of additional shunt products, including chrodrimanins T and U. This is Terpene cyclase cdmG from Talaromyces verruculosus (Penicillium verruculosum).